The primary structure comprises 155 residues: uncharacterized protein (155 aa).

This is an uncharacterized protein from Methanocaldococcus jannaschii (strain ATCC 43067 / DSM 2661 / JAL-1 / JCM 10045 / NBRC 100440) (Methanococcus jannaschii).